The following is a 100-amino-acid chain: NAD(P)H-quinone oxidoreductase subunit 4L, chloroplastic (100 aa).

A run of 3 helical transmembrane segments spans residues 1-21 (MIENILIIGAFLFCIGTYGLI), 27-47 (IKVLMCLELMFNSVNINLVAF), and 61-81 (FAVFIIAIAAAEAAIGLAIVF).

It belongs to the complex I subunit 4L family. NDH is composed of at least 16 different subunits, 5 of which are encoded in the nucleus.

It localises to the plastid. The protein localises to the chloroplast thylakoid membrane. The catalysed reaction is a plastoquinone + NADH + (n+1) H(+)(in) = a plastoquinol + NAD(+) + n H(+)(out). It catalyses the reaction a plastoquinone + NADPH + (n+1) H(+)(in) = a plastoquinol + NADP(+) + n H(+)(out). NDH shuttles electrons from NAD(P)H:plastoquinone, via FMN and iron-sulfur (Fe-S) centers, to quinones in the photosynthetic chain and possibly in a chloroplast respiratory chain. The immediate electron acceptor for the enzyme in this species is believed to be plastoquinone. Couples the redox reaction to proton translocation, and thus conserves the redox energy in a proton gradient. This chain is NAD(P)H-quinone oxidoreductase subunit 4L, chloroplastic, found in Chaetosphaeridium globosum (Charophycean green alga).